The sequence spans 114 residues: Large ribosomal subunit protein uL22 (114 aa).

It belongs to the universal ribosomal protein uL22 family. Part of the 50S ribosomal subunit.

This protein binds specifically to 23S rRNA; its binding is stimulated by other ribosomal proteins, e.g. L4, L17, and L20. It is important during the early stages of 50S assembly. It makes multiple contacts with different domains of the 23S rRNA in the assembled 50S subunit and ribosome. In terms of biological role, the globular domain of the protein is located near the polypeptide exit tunnel on the outside of the subunit, while an extended beta-hairpin is found that lines the wall of the exit tunnel in the center of the 70S ribosome. This Lysinibacillus sphaericus (strain C3-41) protein is Large ribosomal subunit protein uL22.